Consider the following 88-residue polypeptide: Transcription factor ILI5 (88 aa).

The bHLH domain maps to 1–54 (MSSRRSSRGSISEEEINELISKLQSLLPNSRRRGSSQASTTKLLKETCNYIKSL).

It belongs to the bHLH protein family. In terms of assembly, interacts with APG.

It localises to the nucleus. Its function is as follows. Atypical and probable non DNA-binding bHLH transcription factor that acts as a positive regulator of grain size. Binds the transcription repressor APG and forms a heterodimer of antagonistic basic helix-loop-helix transcription factors that regulates grain length and weight by controlling cell elongation in lemma and palea. The polypeptide is Transcription factor ILI5 (ILI5) (Oryza sativa subsp. indica (Rice)).